We begin with the raw amino-acid sequence, 206 residues long: MELNVTTLEGKAAGSVHLSDGIFGLEPRKDLIQRCVNWQLAKSQAGTHKTKGRAEIWRTGKKLFKQKGTGNARHGSARAPQFRGGGRAFGPVVRSHAHDLPKKVRALALRHALSAKAKDGGLIVIDSVELKEAKTKALMGHFSSLGLTSALIIDGAQVHAGFATAARNIPNIDVLPIQGINVYDILRRQKLVLTKAAVDALEARFK.

This sequence belongs to the universal ribosomal protein uL4 family. As to quaternary structure, part of the 50S ribosomal subunit.

One of the primary rRNA binding proteins, this protein initially binds near the 5'-end of the 23S rRNA. It is important during the early stages of 50S assembly. It makes multiple contacts with different domains of the 23S rRNA in the assembled 50S subunit and ribosome. Its function is as follows. Forms part of the polypeptide exit tunnel. This is Large ribosomal subunit protein uL4 from Nitrobacter winogradskyi (strain ATCC 25391 / DSM 10237 / CIP 104748 / NCIMB 11846 / Nb-255).